We begin with the raw amino-acid sequence, 299 residues long: Regucalcin (299 aa).

Position 18 (Glu18) interacts with a divalent metal cation. Substrate is bound by residues Arg101, Asn103, and Glu121. The a divalent metal cation site is built by Asn154 and Asp204. The active-site Proton donor/acceptor is Asp204. Lys244 and Lys253 each carry N6-succinyllysine.

This sequence belongs to the SMP-30/CGR1 family. In terms of assembly, monomer. It depends on Zn(2+) as a cofactor. Requires Mn(2+) as cofactor. Ca(2+) is required as a cofactor. The cofactor is Mg(2+).

The protein resides in the cytoplasm. It carries out the reaction D-glucono-1,5-lactone + H2O = D-gluconate + H(+). It participates in cofactor biosynthesis; L-ascorbate biosynthesis via UDP-alpha-D-glucuronate pathway; L-ascorbate from UDP-alpha-D-glucuronate: step 3/4. Its function is as follows. Gluconolactonase with low activity towards other sugar lactones, including gulonolactone and galactonolactone. Catalyzes a key step in ascorbic acid (vitamin C) biosynthesis. Can also hydrolyze diisopropyl phosphorofluoridate and phenylacetate (in vitro). Calcium-binding protein. Modulates Ca(2+) signaling, and Ca(2+)-dependent cellular processes and enzyme activities. The polypeptide is Regucalcin (RGN) (Sus scrofa (Pig)).